Reading from the N-terminus, the 233-residue chain is Glucosamine-6-phosphate deaminase (233 aa).

Residue Asp-62 is the Proton acceptor; for enolization step of the active site. The For ring-opening step role is filled by Asn-128. His-130 (proton acceptor; for ring-opening step) is an active-site residue. Glu-135 serves as the catalytic For ring-opening step.

Belongs to the glucosamine/galactosamine-6-phosphate isomerase family. NagB subfamily.

The catalysed reaction is alpha-D-glucosamine 6-phosphate + H2O = beta-D-fructose 6-phosphate + NH4(+). It functions in the pathway amino-sugar metabolism; N-acetylneuraminate degradation; D-fructose 6-phosphate from N-acetylneuraminate: step 5/5. Functionally, catalyzes the reversible isomerization-deamination of glucosamine 6-phosphate (GlcN6P) to form fructose 6-phosphate (Fru6P) and ammonium ion. This Enterococcus faecalis (strain ATCC 700802 / V583) protein is Glucosamine-6-phosphate deaminase.